A 606-amino-acid polypeptide reads, in one-letter code: Kelch-like protein 41 (606 aa).

S3 bears the Phosphoserine mark. Residues 33–100 (IDCTLKAGDK…LYSASIDLND (68 aa)) form the BTB domain. In terms of domain architecture, BACK spans 135-237 (CLAILRLGLL…AEKYFKDHVE (103 aa)). 5 Kelch repeats span residues 346 to 398 (QVYV…EVDD), 399 to 447 (KIYV…SHNG), 448 to 495 (MIYC…IHKG), 497 to 542 (IVIA…SLAG), and 544 to 599 (LYAI…TRLN).

As to quaternary structure, interacts with NRAP. Part of a complex that contains CUL3, RBX1 and KLHL41. Interacts with LASP1. In terms of processing, ubiquitinated by E3 ubiquitin ligase complex formed by CUL3 and RBX1 and probably targeted for proteasome-independent degradation. Quinone-induced oxidative stress increases its ubiquitination. In terms of tissue distribution, primarily expressed in skeletal muscle. Also found in heart and lung.

It is found in the cytoplasm. The protein localises to the cytoskeleton. It localises to the cell projection. The protein resides in the pseudopodium. Its subcellular location is the ruffle. It is found in the myofibril. The protein localises to the sarcomere. It localises to the m line. The protein resides in the sarcoplasmic reticulum membrane. Its subcellular location is the endoplasmic reticulum membrane. Functionally, involved in skeletal muscle development and differentiation. Regulates proliferation and differentiation of myoblasts and plays a role in myofibril assembly by promoting lateral fusion of adjacent thin fibrils into mature, wide myofibrils. Required for pseudopod elongation in transformed cells. This Rattus norvegicus (Rat) protein is Kelch-like protein 41 (Klhl41).